The following is a 316-amino-acid chain: Ribosomal RNA small subunit methyltransferase H (316 aa).

Residues 35–37, Asp55, Phe84, Asp105, and Gln112 contribute to the S-adenosyl-L-methionine site; that span reads AGH.

It belongs to the methyltransferase superfamily. RsmH family.

It is found in the cytoplasm. It carries out the reaction cytidine(1402) in 16S rRNA + S-adenosyl-L-methionine = N(4)-methylcytidine(1402) in 16S rRNA + S-adenosyl-L-homocysteine + H(+). Functionally, specifically methylates the N4 position of cytidine in position 1402 (C1402) of 16S rRNA. This chain is Ribosomal RNA small subunit methyltransferase H, found in Streptococcus sanguinis (strain SK36).